The sequence spans 325 residues: Leucine carboxyl methyltransferase 1 (325 aa).

S-adenosyl-L-methionine contacts are provided by residues arginine 79, glycine 104, aspartate 127, 174–175 (DL), and glutamate 200.

The protein belongs to the methyltransferase superfamily. LCMT family.

The catalysed reaction is [phosphatase 2A protein]-C-terminal L-leucine + S-adenosyl-L-methionine = [phosphatase 2A protein]-C-terminal L-leucine methyl ester + S-adenosyl-L-homocysteine. In terms of biological role, methylates the carboxyl group of the C-terminal leucine residue of protein phosphatase 2A catalytic subunits to form alpha-leucine ester residues. This Eremothecium gossypii (strain ATCC 10895 / CBS 109.51 / FGSC 9923 / NRRL Y-1056) (Yeast) protein is Leucine carboxyl methyltransferase 1 (PPM1).